The sequence spans 366 residues: Ribosomal RNA large subunit methyltransferase M (366 aa).

Residues Ser188, 221 to 224 (CPGG), Asp240, Asp260, and Asp277 each bind S-adenosyl-L-methionine. Residue Lys306 is the Proton acceptor of the active site.

It belongs to the class I-like SAM-binding methyltransferase superfamily. RNA methyltransferase RlmE family. RlmM subfamily. In terms of assembly, monomer.

The protein localises to the cytoplasm. The enzyme catalyses cytidine(2498) in 23S rRNA + S-adenosyl-L-methionine = 2'-O-methylcytidine(2498) in 23S rRNA + S-adenosyl-L-homocysteine + H(+). Its function is as follows. Catalyzes the 2'-O-methylation at nucleotide C2498 in 23S rRNA. The sequence is that of Ribosomal RNA large subunit methyltransferase M from Photorhabdus sp. (strain Az29).